The sequence spans 348 residues: MPGWRLLAQAGARVLGCGARGLGADPGLERRKNILFFVRNLHSKSSTWWDEHLSEENLSFVKQLVSDENKTQLTSKLNPLKDEPWPLHPWEPGSFRVGLIALKLGMMPLWTKDGQKHAVTLLQVQDCHVLKYTPKEDHNGKIAALTVGGKTVSRFYKPDSRLEFYRDLGLPPKQIHKIFHVTDNAVIKPGTPLYAAHFRPGQYVDVTAKTIGKGFQGVMKRWGFKGQPASHGQTKTHRRPGAISTGDIARVWPGTKMPGRMGNQNRTVYGLKVWRVNTKHNIIYVNGSVPGHKNCLVKIKDSTLPAYKDSCKNLPFPTYFPDGDEEELPEDLFDESVWQPSEPSITFA.

A mitochondrion-targeting transit peptide spans 1 to 40; the sequence is MPGWRLLAQAGARVLGCGARGLGADPGLERRKNILFFVRN.

Belongs to the universal ribosomal protein uL3 family. Component of the mitochondrial ribosome large subunit (39S) which comprises a 16S rRNA and about 50 distinct proteins.

The protein resides in the mitochondrion. This Mus musculus (Mouse) protein is Large ribosomal subunit protein uL3m (Mrpl3).